The following is a 278-amino-acid chain: 4-hydroxy-3-methylbut-2-enyl diphosphate reductase (278 aa).

Cys12 is a binding site for [4Fe-4S] cluster. His36 and His70 together coordinate (2E)-4-hydroxy-3-methylbut-2-enyl diphosphate. Dimethylallyl diphosphate-binding residues include His36 and His70. 2 residues coordinate isopentenyl diphosphate: His36 and His70. Cys92 contacts [4Fe-4S] cluster. His120 is a binding site for (2E)-4-hydroxy-3-methylbut-2-enyl diphosphate. His120 serves as a coordination point for dimethylallyl diphosphate. His120 serves as a coordination point for isopentenyl diphosphate. Catalysis depends on Glu122, which acts as the Proton donor. Thr158 is a binding site for (2E)-4-hydroxy-3-methylbut-2-enyl diphosphate. A [4Fe-4S] cluster-binding site is contributed by Cys186. 3 residues coordinate (2E)-4-hydroxy-3-methylbut-2-enyl diphosphate: Ser214, Asn216, and Ser258. The dimethylallyl diphosphate site is built by Ser214, Asn216, and Ser258. Isopentenyl diphosphate is bound by residues Ser214, Asn216, and Ser258.

The protein belongs to the IspH family. The cofactor is [4Fe-4S] cluster.

It carries out the reaction isopentenyl diphosphate + 2 oxidized [2Fe-2S]-[ferredoxin] + H2O = (2E)-4-hydroxy-3-methylbut-2-enyl diphosphate + 2 reduced [2Fe-2S]-[ferredoxin] + 2 H(+). It catalyses the reaction dimethylallyl diphosphate + 2 oxidized [2Fe-2S]-[ferredoxin] + H2O = (2E)-4-hydroxy-3-methylbut-2-enyl diphosphate + 2 reduced [2Fe-2S]-[ferredoxin] + 2 H(+). The protein operates within isoprenoid biosynthesis; dimethylallyl diphosphate biosynthesis; dimethylallyl diphosphate from (2E)-4-hydroxy-3-methylbutenyl diphosphate: step 1/1. Its pathway is isoprenoid biosynthesis; isopentenyl diphosphate biosynthesis via DXP pathway; isopentenyl diphosphate from 1-deoxy-D-xylulose 5-phosphate: step 6/6. Its function is as follows. Catalyzes the conversion of 1-hydroxy-2-methyl-2-(E)-butenyl 4-diphosphate (HMBPP) into a mixture of isopentenyl diphosphate (IPP) and dimethylallyl diphosphate (DMAPP). Acts in the terminal step of the DOXP/MEP pathway for isoprenoid precursor biosynthesis. This Campylobacter lari (strain RM2100 / D67 / ATCC BAA-1060) protein is 4-hydroxy-3-methylbut-2-enyl diphosphate reductase.